Reading from the N-terminus, the 857-residue chain is Gelation factor (857 aa).

At methionine 1 the chain carries Blocked amino end (Met). An actin-binding region spans residues 1–250 (MAAAPSGKTW…EKKRRETSDA (250 aa)). Calponin-homology (CH) domains lie at 12–117 (DVQK…LRYQ) and 125–227 (NSPK…DYAL). The segment at 229–246 (KEKRDADALAALEKKRRE) is regulatory site. Filamin repeat units lie at residues 245-346 (RETS…NVKI), 347-446 (DGSD…EVKI), 447-545 (LNSD…SIHI), 546-645 (KPAA…TVTV), 646-747 (KPAP…DVKC), and 763-837 (FTVA…KQVL). Positions 832–857 (PFKQVLGNPGKKNPEVKSFTTTRTAN) are disordered.

Homodimer.

In terms of biological role, F-actin cross-linking protein. This chain is Gelation factor (abpC), found in Dictyostelium discoideum (Social amoeba).